The chain runs to 96 residues: Phosphoribosyl-ATP pyrophosphatase (96 aa).

The protein belongs to the PRA-PH family.

The protein localises to the cytoplasm. It carries out the reaction 1-(5-phospho-beta-D-ribosyl)-ATP + H2O = 1-(5-phospho-beta-D-ribosyl)-5'-AMP + diphosphate + H(+). It functions in the pathway amino-acid biosynthesis; L-histidine biosynthesis; L-histidine from 5-phospho-alpha-D-ribose 1-diphosphate: step 2/9. This Methanococcus maripaludis (strain C5 / ATCC BAA-1333) protein is Phosphoribosyl-ATP pyrophosphatase.